We begin with the raw amino-acid sequence, 277 residues long: 4-diphosphocytidyl-2-C-methyl-D-erythritol kinase (277 aa).

Lys9 is an active-site residue. Pro91–Ser101 lines the ATP pocket. Asp133 is an active-site residue.

Belongs to the GHMP kinase family. IspE subfamily.

It carries out the reaction 4-CDP-2-C-methyl-D-erythritol + ATP = 4-CDP-2-C-methyl-D-erythritol 2-phosphate + ADP + H(+). It participates in isoprenoid biosynthesis; isopentenyl diphosphate biosynthesis via DXP pathway; isopentenyl diphosphate from 1-deoxy-D-xylulose 5-phosphate: step 3/6. Functionally, catalyzes the phosphorylation of the position 2 hydroxy group of 4-diphosphocytidyl-2C-methyl-D-erythritol. In Acinetobacter baumannii (strain AB307-0294), this protein is 4-diphosphocytidyl-2-C-methyl-D-erythritol kinase.